The chain runs to 102 residues: Vesicle-associated membrane protein 5 (102 aa).

The Cytoplasmic segment spans residues 1 to 72; that stretch reads MAGKELERCQ…RWENIRCRVY (72 aa). The v-SNARE coiled-coil homology domain occupies 5-65; the sequence is ELERCQRQAD…KTLAQQKRWE (61 aa). Serine 41, serine 48, and serine 49 each carry phosphoserine. A helical; Anchor for type IV membrane protein transmembrane segment spans residues 73–93; that stretch reads LGLAVAGGLLLILVVLLVIFL. The Vesicular segment spans residues 94–102; that stretch reads PSGEDSSKP.

It belongs to the synaptobrevin family.

Its subcellular location is the cell membrane. The protein localises to the endomembrane system. It localises to the golgi apparatus. It is found in the trans-Golgi network membrane. In terms of biological role, may participate in trafficking events that are associated with myogenesis, such as myoblast fusion and/or GLUT4 trafficking. In Rattus norvegicus (Rat), this protein is Vesicle-associated membrane protein 5 (Vamp5).